A 196-amino-acid chain; its full sequence is dTDP-4-dehydro-6-deoxyglucose 3-epimerase (196 aa).

Substrate-binding positions include Arg-21, Glu-26, 45-47 (QVN), and Arg-57. The active-site Proton acceptor is the His-60. The substrate site is built by Lys-70 and Arg-117. The active-site Proton donor is Tyr-130. Substrate contacts are provided by Glu-141 and Arg-166.

The protein belongs to the dTDP-4-dehydrorhamnose 3,5-epimerase family. Homodimer.

The catalysed reaction is dTDP-4-dehydro-6-deoxy-alpha-D-glucose = dTDP-4-dehydro-6-deoxy-alpha-D-allose. Its pathway is antibiotic biosynthesis. In terms of biological role, involved in the biosynthesis of dTDP-6-deoxy-D-allose, an intermediate in the biosynthesis of mycinose, which is one of the two unusual sugars attached to the 16-membered macrolactone ring of the aglycone antibiotic dihydrochalcomycin (GERI-155). Catalyzes the conversion of dTDP-4-oxo-6-deoxyglucose to dTDP-4-oxo-6-deoxyallose, via a C-3 epimerization. The polypeptide is dTDP-4-dehydro-6-deoxyglucose 3-epimerase (Streptomyces sp).